The primary structure comprises 108 residues: Protein YcgL (108 aa).

Positions 12 to 96 (MFCVIYRSSK…PPEDLLKQHL (85 aa)) constitute a YcgL domain.

The chain is Protein YcgL from Escherichia coli O9:H4 (strain HS).